Here is a 59-residue protein sequence, read N- to C-terminus: Large ribosomal subunit protein uL30 (59 aa).

The protein belongs to the universal ribosomal protein uL30 family. Part of the 50S ribosomal subunit.

The protein is Large ribosomal subunit protein uL30 of Clostridium botulinum (strain ATCC 19397 / Type A).